The chain runs to 206 residues: Protein YmaB (206 aa).

The chain is Protein YmaB (ymaB) from Bacillus subtilis (strain 168).